A 50-amino-acid polypeptide reads, in one-letter code: Cytochrome c oxidase subunit 4 (50 aa).

The Cytoplasmic portion of the chain corresponds to 2-17 (ASHHEITDHKHGEMDI). The helical transmembrane segment at 18-49 (RHQQATFAGFIKGATWVSILSIAVLVFLALAN) threads the bilayer. Position 50 (Ser-50) is a topological domain, periplasmic.

It localises to the cell inner membrane. The catalysed reaction is 4 Fe(II)-[cytochrome c] + O2 + 8 H(+)(in) = 4 Fe(III)-[cytochrome c] + 2 H2O + 4 H(+)(out). In terms of biological role, not required for enzymatic activity or proton pumping of the cytochrome c oxidase complex. The sequence is that of Cytochrome c oxidase subunit 4 (ctaH) from Paracoccus denitrificans.